We begin with the raw amino-acid sequence, 173 residues long: NAD(P)H-quinone oxidoreductase subunit J (173 aa).

Belongs to the complex I 30 kDa subunit family. In terms of assembly, NDH-1 can be composed of about 15 different subunits; different subcomplexes with different compositions have been identified which probably have different functions.

It localises to the cellular thylakoid membrane. The catalysed reaction is a plastoquinone + NADH + (n+1) H(+)(in) = a plastoquinol + NAD(+) + n H(+)(out). The enzyme catalyses a plastoquinone + NADPH + (n+1) H(+)(in) = a plastoquinol + NADP(+) + n H(+)(out). Its function is as follows. NDH-1 shuttles electrons from an unknown electron donor, via FMN and iron-sulfur (Fe-S) centers, to quinones in the respiratory and/or the photosynthetic chain. The immediate electron acceptor for the enzyme in this species is believed to be plastoquinone. Couples the redox reaction to proton translocation, and thus conserves the redox energy in a proton gradient. Cyanobacterial NDH-1 also plays a role in inorganic carbon-concentration. This Prochlorococcus marinus (strain NATL2A) protein is NAD(P)H-quinone oxidoreductase subunit J.